The chain runs to 405 residues: Deoxyguanosinetriphosphate triphosphohydrolase-like protein (405 aa).

An HD domain is found at 75-219; it reads RLTHTIEVAQ…AAIADDIAYN (145 aa).

This sequence belongs to the dGTPase family. Type 2 subfamily.

The chain is Deoxyguanosinetriphosphate triphosphohydrolase-like protein from Rhizobium etli (strain ATCC 51251 / DSM 11541 / JCM 21823 / NBRC 15573 / CFN 42).